A 125-amino-acid polypeptide reads, in one-letter code: Large ribosomal subunit protein bL12 (125 aa).

Belongs to the bacterial ribosomal protein bL12 family. As to quaternary structure, homodimer. Part of the ribosomal stalk of the 50S ribosomal subunit. Forms a multimeric L10(L12)X complex, where L10 forms an elongated spine to which 2 to 4 L12 dimers bind in a sequential fashion. Binds GTP-bound translation factors.

Functionally, forms part of the ribosomal stalk which helps the ribosome interact with GTP-bound translation factors. Is thus essential for accurate translation. This Caldanaerobacter subterraneus subsp. tengcongensis (strain DSM 15242 / JCM 11007 / NBRC 100824 / MB4) (Thermoanaerobacter tengcongensis) protein is Large ribosomal subunit protein bL12.